The following is a 667-amino-acid chain: Bicarbonate transport ATP-binding protein CmpC (667 aa).

The ABC transporter domain maps to 5 to 239 (VAVDNIDKVF…RPRKRMEVVE (235 aa)). Position 42–49 (42–49 (GHSGCGKS)) interacts with ATP. The interval 281 to 667 (LELGYVPLVA…DNPTPAPVFA (387 aa)) is cmpA-like.

This sequence belongs to the ABC transporter superfamily. Nitrate/nitrite/cyanate uptake transporter (NitT) (TC 3.A.1.16) family. In terms of assembly, the complex is composed of two ATP-binding proteins (CmpC and CmpD), a transmembrane protein (CmpB) and a solute-binding protein (CmpA).

It localises to the cell inner membrane. Part of the ABC transporter complex CmpABCD involved in bicarbonate transport. Responsible for energy coupling to the transport system. This Synechocystis sp. (strain ATCC 27184 / PCC 6803 / Kazusa) protein is Bicarbonate transport ATP-binding protein CmpC (cmpC).